A 255-amino-acid chain; its full sequence is Pimeloyl-[acyl-carrier protein] methyl ester esterase (255 aa).

Residues 16 to 241 (LVLVHGWGMN…QSSHAPFMTE (226 aa)) enclose the AB hydrolase-1 domain. Substrate-binding positions include Trp22, 82-83 (SL), and 143-147 (FMALQ). Residue Ser82 is the Nucleophile of the active site. Catalysis depends on residues Asp207 and His235. His235 serves as a coordination point for substrate.

This sequence belongs to the AB hydrolase superfamily. Carboxylesterase BioH family. As to quaternary structure, monomer.

Its subcellular location is the cytoplasm. The catalysed reaction is 6-carboxyhexanoyl-[ACP] methyl ester + H2O = 6-carboxyhexanoyl-[ACP] + methanol + H(+). Its pathway is cofactor biosynthesis; biotin biosynthesis. Functionally, the physiological role of BioH is to remove the methyl group introduced by BioC when the pimeloyl moiety is complete. It allows to synthesize pimeloyl-ACP via the fatty acid synthetic pathway through the hydrolysis of the ester bonds of pimeloyl-ACP esters. The polypeptide is Pimeloyl-[acyl-carrier protein] methyl ester esterase (Vibrio cholerae serotype O1 (strain ATCC 39315 / El Tor Inaba N16961)).